The chain runs to 376 residues: Putative clathrin assembly protein At1g25240 (376 aa).

One can recognise an ENTH domain in the interval 25 to 156 (KTSFRNPDLD…FFLSDQIRRR (132 aa)).

It is found in the membrane. Its subcellular location is the clathrin-coated pit. The protein resides in the golgi apparatus. It localises to the cytoplasmic vesicle. The protein localises to the clathrin-coated vesicle. This chain is Putative clathrin assembly protein At1g25240, found in Arabidopsis thaliana (Mouse-ear cress).